A 185-amino-acid polypeptide reads, in one-letter code: Elongation factor P (185 aa).

Belongs to the elongation factor P family.

Its subcellular location is the cytoplasm. It participates in protein biosynthesis; polypeptide chain elongation. Its function is as follows. Involved in peptide bond synthesis. Stimulates efficient translation and peptide-bond synthesis on native or reconstituted 70S ribosomes in vitro. Probably functions indirectly by altering the affinity of the ribosome for aminoacyl-tRNA, thus increasing their reactivity as acceptors for peptidyl transferase. In Nitrosomonas eutropha (strain DSM 101675 / C91 / Nm57), this protein is Elongation factor P.